The following is a 500-amino-acid chain: MSNMQQKTDVILIGAGIMSATLGSLLKELAPEWEIKVFEKLASAGEESSNEWNNAGTGHSALCELNYTSEKSDGSIDISKAVKVNEQFQLSRQFWAYLVKSKLIRNPQDFIMPLPHMSLVQGEKNVQFLKNRFEALSKNPLFQGMEFSDSPETLKKWLPLIMEGRTSNEPMAATKIDSGTDVNFGALTRMLFDYLKTKNVELNYKHSVENIKRTKNGLWEVKVHDMNSGKIEHHTAKFVFIGGGGGSLPLLQKTGIPESKHIGGFPVSGLFMVCKNQKVVEQHHAKVYGKAKVGAPPMSVPHLDTRYIDNKKALLFGPFAGFSPKFLKTGSNLDLIGSVKPNNVLTMLAAGVKEMGLTKYLIQQVMLSHEKRMEELREFIPNAKSEDWDIVVAGQRVQVIKDTDAGGKGTLQFGTEVVSAADGSIAALLGASPGASTAVHVMLEVLEKCFPSRMVEWEGKIKEMIPSYGISLTENPRLFQDLHTSTGRTLGLNEKETVHN.

This sequence belongs to the MQO family. The cofactor is FAD.

It catalyses the reaction (S)-malate + a quinone = a quinol + oxaloacetate. It participates in carbohydrate metabolism; tricarboxylic acid cycle; oxaloacetate from (S)-malate (quinone route): step 1/1. The protein is Probable malate:quinone oxidoreductase of Bacillus cereus (strain AH187).